The following is a 62-amino-acid chain: Delta-theraphotoxin-Cg1a 1 (62 aa).

The N-terminal stretch at 1-21 is a signal peptide; it reads MKTSILFVIFSLALLFALSAA. The propeptide occupies 22-29; it reads TEIEETDR. 3 cysteine pairs are disulfide-bonded: C31-C46, C38-C51, and C45-C58.

It belongs to the neurotoxin 10 (Hwtx-1) family. 33 (Jztx-1) subfamily. Expressed by the venom gland.

The protein localises to the secreted. Its function is as follows. Inhibits voltage-gated sodium channels, preferentially subtype Nav1.5/SCN5A (in cardiac myocytes), but also Nav1.6/SCN8A and Nav1.7/SCN9A (TTX-sensitive Nav in rat DRG neurons) and invertebrate Nav (in insect neurons) as well as voltage-gated potassium channels of the subtype Kv2.1/KCNB1. Is suggested to bind to site 3 of the sodium channels and inhibit the inactivation of the activated channels, thereby blocking neuronal transmission. On potassium channels, inhibits activation of channels with an IC(50) of 8.05 uM through a voltage sensor-trapping mechanism. Increases muscle contraction in several assays (mouse phrenic nerve-diaphragm, toad heart, rat vas deferens) and is suggested to act both presynaptically and postsynaptically. Functionally, moderately inhibits voltage-gated sodium channels and weakly inhibits voltage-gated potassium channel. Inhibits the inactivation of rat Nav1.2/SCN2A (IC(50)=870 nM), rat Nav1.3/SCN3A (IC(50)=845 nM), rat Nav1.4/SCN4A (IC(50)=339 nM), human Nav1.5/SCN5A (IC(50)=335 nM) and human Nav1.7/SCN9A sodium channels (IC(50)=348 nM). The toxin delays the inactivation of sodium channels without affecting the activation and steady-state inactivation kinetics in the physiological range of voltages. Site-directed mutagenesis of the sodium channel indicates that the toxin interacts with site 3 located at the extracellular S3-S4 linker of domain IV. On potassium channels, it inhibits activation of channels with an IC(50) of 8.05 uM through a voltage sensor-trapping mechanism. It increases muscle contraction in several assays (mouse phrenic nerve-diaphragm, toad heart, rat vas deferens) and is suggested to act both presynaptically and postsynaptically. The protein is Delta-theraphotoxin-Cg1a 1 of Chilobrachys guangxiensis (Chinese earth tiger tarantula).